The chain runs to 141 residues: MAKKVVKTVKLQIPAGKANPAPPVGPALGQAQVNIPSFCSQFNETTKDQMGFVIPVIISVYEDRTFTFVTKTPPASDLLKKAAKIESGSANASQTKVATITHKQVEEIANLKLSDLNAYCVEKACKIIEGTARNMGILVKD.

This sequence belongs to the universal ribosomal protein uL11 family. As to quaternary structure, part of the ribosomal stalk of the 50S ribosomal subunit. Interacts with L10 and the large rRNA to form the base of the stalk. L10 forms an elongated spine to which L12 dimers bind in a sequential fashion forming a multimeric L10(L12)X complex. One or more lysine residues are methylated.

Functionally, forms part of the ribosomal stalk which helps the ribosome interact with GTP-bound translation factors. The sequence is that of Large ribosomal subunit protein uL11 from Aster yellows witches'-broom phytoplasma (strain AYWB).